The primary structure comprises 320 residues: Olfactory receptor 7C1 (320 aa).

Residues 1 to 25 are Extracellular-facing; it reads METGNQTHAQEFLLLGFSATSEIQF. The N-linked (GlcNAc...) asparagine glycan is linked to N5. A helical membrane pass occupies residues 26 to 46; that stretch reads ILFGLFLSMYLVTFTGNLLII. Over 47-54 the chain is Cytoplasmic; it reads LAICSDSH. The chain crosses the membrane as a helical span at residues 55–75; it reads LHTPMYFFLSNLSFADLCFTS. Over 76-99 the chain is Extracellular; that stretch reads TTVPKMLLNILTQNKFITYAGCLS. The cysteines at positions 97 and 189 are disulfide-linked. The chain crosses the membrane as a helical span at residues 100–120; it reads QIFFFTSFGCLDNLLLTVMAY. The Cytoplasmic portion of the chain corresponds to 121 to 139; that stretch reads DRFVAVCHPLHYTVIMNPQ. A helical membrane pass occupies residues 140 to 160; the sequence is LCGLLVLGSWCISVMGSLLET. The Extracellular portion of the chain corresponds to 161 to 197; sequence LTVLRLSFCTEMEIPHFFCDLLEVLKLACSDTFINNV. Residues 198 to 217 traverse the membrane as a helical segment; it reads VIYFATGVLGVISFTGIFFS. Over 218 to 237 the chain is Cytoplasmic; the sequence is YYKIVFSILRISSAGRKHKA. The helical transmembrane segment at 238-258 threads the bilayer; the sequence is FSTCGSHLSVVTLFYGTGFGV. Topologically, residues 259 to 271 are extracellular; that stretch reads YLSSAATPSSRTS. Residues 272 to 292 form a helical membrane-spanning segment; it reads LVASVMYTMVTPMLNPFIYSL. The Cytoplasmic portion of the chain corresponds to 293–313; the sequence is RNTDMKRALGRLLSRATFFNG.

It belongs to the G-protein coupled receptor 1 family.

It is found in the cell membrane. In terms of biological role, odorant receptor. This Homo sapiens (Human) protein is Olfactory receptor 7C1 (OR7C1).